Consider the following 384-residue polypeptide: Putative glutamate--cysteine ligase 2-1 (384 aa).

The protein belongs to the glutamate--cysteine ligase type 2 family. YbdK subfamily.

The enzyme catalyses L-cysteine + L-glutamate + ATP = gamma-L-glutamyl-L-cysteine + ADP + phosphate + H(+). ATP-dependent carboxylate-amine ligase which exhibits weak glutamate--cysteine ligase activity. This chain is Putative glutamate--cysteine ligase 2-1, found in Paenarthrobacter aurescens (strain TC1).